The sequence spans 94 residues: Large ribosomal subunit protein eL42 (94 aa).

Zn(2+)-binding residues include cysteine 11, cysteine 14, cysteine 71, and cysteine 74. Residues 11–74 (CPFCKKHTIH…LDLRFRCTEC (64 aa)) form a C4-type zinc finger.

This sequence belongs to the eukaryotic ribosomal protein eL42 family. In terms of assembly, part of the 50S ribosomal subunit. Requires Zn(2+) as cofactor.

Functionally, binds to the 23S rRNA. The chain is Large ribosomal subunit protein eL42 from Pyrococcus furiosus (strain ATCC 43587 / DSM 3638 / JCM 8422 / Vc1).